Consider the following 165-residue polypeptide: PTS system glucose-specific EIIA component (165 aa).

The PTS EIIA type-1 domain maps to 33 to 137; the sequence is DPVFAGRMMG…STITPIVITN (105 aa). Zn(2+) contacts are provided by histidine 70 and histidine 85. Catalysis depends on histidine 85, which acts as the Tele-phosphohistidine intermediate; for EIIA activity. Residue histidine 85 is modified to Phosphohistidine; by HPr.

In terms of assembly, heterodimer with glycerol kinase (glpk). The cofactor is Zn(2+).

The protein localises to the cytoplasm. In terms of biological role, the phosphoenolpyruvate-dependent sugar phosphotransferase system (sugar PTS), a major carbohydrate active transport system, catalyzes the phosphorylation of incoming sugar substrates concomitantly with their translocation across the cell membrane. The enzyme II complex composed of PtsG and Crr is involved in glucose transport. The polypeptide is PTS system glucose-specific EIIA component (crr) (Bacillus cereus (strain ATCC 14579 / DSM 31 / CCUG 7414 / JCM 2152 / NBRC 15305 / NCIMB 9373 / NCTC 2599 / NRRL B-3711)).